The primary structure comprises 333 residues: Transaldolase (333 aa).

Lys-136 (schiff-base intermediate with substrate) is an active-site residue.

This sequence belongs to the transaldolase family. Type 1 subfamily. In terms of assembly, homodimer.

Its subcellular location is the cytoplasm. It carries out the reaction D-sedoheptulose 7-phosphate + D-glyceraldehyde 3-phosphate = D-erythrose 4-phosphate + beta-D-fructose 6-phosphate. It participates in carbohydrate degradation; pentose phosphate pathway; D-glyceraldehyde 3-phosphate and beta-D-fructose 6-phosphate from D-ribose 5-phosphate and D-xylulose 5-phosphate (non-oxidative stage): step 2/3. Its function is as follows. Transaldolase is important for the balance of metabolites in the pentose-phosphate pathway. The chain is Transaldolase from Acidobacterium capsulatum (strain ATCC 51196 / DSM 11244 / BCRC 80197 / JCM 7670 / NBRC 15755 / NCIMB 13165 / 161).